Consider the following 172-residue polypeptide: Bifunctional protein PyrR (172 aa).

Residues 90–102 (LVLVDDVLMSGRT) carry the PRPP-binding motif.

The protein belongs to the purine/pyrimidine phosphoribosyltransferase family. PyrR subfamily.

The enzyme catalyses UMP + diphosphate = 5-phospho-alpha-D-ribose 1-diphosphate + uracil. Regulates the transcription of the pyrimidine nucleotide (pyr) operon in response to exogenous pyrimidines. Functionally, also displays a weak uracil phosphoribosyltransferase activity which is not physiologically significant. The polypeptide is Bifunctional protein PyrR (Pseudomonas putida (strain GB-1)).